The chain runs to 1634 residues: MNNQFEVFRPNSYTYDVLAKQYTETIASSGHMVLSHHGFYKGNLNENKLKNGKGTFLFPNSIYSGQWNSDKKEGDGTLIILKPQKIQKKSSQSKSQQQPPSQTKKSSSPINLSPRLQGQNPTITTNGSNNNNKVNIESLINKLNDKFNQCEELINQTSQEEFLKQQDYYNGKWINGKANGIGCFHFSKDDSMHYDFWRYGVVIRYANQQNILKPLYDDSVPAGLLNSREILKDMMEDWKSVVVGDDDFPCTRPYLTTPTASISLNRENINIYSNNNSNGTTSPTSPSILSPTQVPLSPPKVNTAPSTLISEDDNNFTSGSGFCSPSSSLSIKMSSPISSGLQHSKTQPNVSQSQNQQIQQQQQQQQQQPSLLVNSTIVQTNTNNNKFNDLLINQRNQQKILKKQLLKSNQQKQSFGIITSNYLKSRLENEEKFFMTLILFISKWEIPFKSFNIPNNPSIHASFLIFVPDTDNCTFISLSNLIMQSNVLERLIFKLLIDPMSKVLNSTALNTLTESQTLGNLSTYNNNNNNTINNTISIGQSKSANSSPNKISPSVSLVGVSSLTTLPSSTPEERELHKLLPICLDLDETPHIEKECIASILNIFKLFPTIEDYQPPQFIPDTICKFISCFKKTRALENYLLQKQFQMSKDYFFKPTATTATPNNNNNSSGNSKLTTTTHLTNNTTTTTIVSGSKTLKRTKVTPPSQSSSSSSPSSDQTNLPSIAISSSNGISYKSPPVTSPPPTKPTFSVSLTTSNKIDISASNPNGNGMKLYGSNATTTAASSILNNNNNNNNNNNNNNNNNNNNNNNNNNNCGQRRQTVESIFPTFKQQSNTDLLTSLMQSTSISLSNKYSSSTTTISTVDQTPPELTLQSLNILLSQFKQSYLFPDSITLSFNYLTKQKENIEQMEKIIQSKIQLIQETKPKQQQLQQQQQKNLLNYSSSFNEYLTNHDNLIDSILIGLKNDLSQLQKSFEICLTLYKEMITQQIQLVLKRLKSAHSFINQLIGLPQSRVSKLPKDFIVRFIKHTHRIIYQLYNSANNTFIKLDNEIKIDIDEFIVQSNDLFSKLPNGAITTNGTTMNSIPSPVSPIGSPPLPSISASVYEYFLGKKSSSSLTLNVSQQQQSSNSLDRSSVQFEPSDITPGPFSFISPLDKIIEEIMSGHYQLILPVASSGDDLLVSVVSLGLIDLRSYLSSNNRLKEISKSSLIQLFNILLHSTVICHNINSYLPEVFKTLILLLPFYPKKDELFIKYKEIFIGFMELCVIDELCGFSFIYLEFLGLLVKPKKKGLRKELKKEFVELFPIQLFIDIMEKPIVDATNKNAEKTRAQAAQILINLSISSIECLLEVKSKNALGPILDICKFGQAFAHTQIEESELQILQFLGEGALAEVHKGIWKGKEVAVKIFNEGSFSFRLEDFLKEVAILGLISHPNLLKLKGACIAPRSHKSTFMIVTELMHKGTLLEVINKNKPLSLEDIIKYALSVAQGLAYLHSVDFIHRDIKAANILVDKNNNAKVGDFGLSRVIDNNFNMTAVAGTPKWESPECLMGEAYTSASDVYSYGMMLFELATGDEPFLEIQSIVELARSVCDKKLKPKISSSVPNFISSLIKDCLHNSPKKRPTMNQIIQKLCNHKC.

Residues 40 to 63 (YKGNLNENKLKNGKGTFLFPNSIY) form an MORN 1 repeat. The tract at residues 84–131 (QKIQKKSSQSKSQQQPPSQTKKSSSPINLSPRLQGQNPTITTNGSNNN) is disordered. Residues 89–109 (KSSQSKSQQQPPSQTKKSSSP) show a composition bias toward low complexity. The segment covering 110–119 (INLSPRLQGQ) has biased composition (polar residues). Over residues 120-131 (NPTITTNGSNNN) the composition is skewed to low complexity. The MORN 2 repeat unit spans residues 169-191 (YNGKWINGKANGIGCFHFSKDDS). 2 stretches are compositionally biased toward low complexity: residues 273–292 (SNNN…LSPT) and 318–339 (SGSG…PISS). Disordered stretches follow at residues 273–367 (SNNN…QQQQ), 658–750 (TTAT…TFSV), and 783–816 (SSIL…NCGQ). Residues 340 to 351 (GLQHSKTQPNVS) show a composition bias toward polar residues. 3 stretches are compositionally biased toward low complexity: residues 352-367 (QSQN…QQQQ), 658-688 (TTAT…TTTT), and 703-715 (PPSQ…SPSS). Residues 716 to 732 (DQTNLPSIAISSSNGIS) are compositionally biased toward polar residues. Low complexity predominate over residues 787 to 813 (NNNNNNNNNNNNNNNNNNNNNNNNNNN). Residues 1255 to 1275 (IFIGFMELCVIDELCGFSFIY) traverse the membrane as a helical segment. In terms of domain architecture, Protein kinase spans 1377-1634 (LQILQFLGEG…IIQKLCNHKC (258 aa)). ATP is bound by residues 1383-1391 (LGEGALAEV) and Lys-1404. The Proton acceptor role is filled by Asp-1500.

The protein belongs to the protein kinase superfamily. TKL Ser/Thr protein kinase family.

It is found in the membrane. It carries out the reaction L-seryl-[protein] + ATP = O-phospho-L-seryl-[protein] + ADP + H(+). The catalysed reaction is L-threonyl-[protein] + ATP = O-phospho-L-threonyl-[protein] + ADP + H(+). The polypeptide is Probable serine/threonine-protein kinase DDB_G0282895 (Dictyostelium discoideum (Social amoeba)).